Reading from the N-terminus, the 761-residue chain is Translation initiation factor IF-2 (761 aa).

The tract at residues D39–P179 is disordered. Positions K45–Q105 are enriched in low complexity. The segment covering T106 to A120 has biased composition (polar residues). Residues P142–N154 are compositionally biased toward low complexity. Residues R155–Q168 show a composition bias toward basic residues. The region spanning E262–D435 is the tr-type G domain. Residues G271–T278 form a G1 region. Residue G271–T278 participates in GTP binding. The G2 stretch occupies residues G296–H300. The interval D317–G320 is G3. Residues D317–H321 and N371–D374 contribute to the GTP site. Residues N371–D374 form a G4 region. The tract at residues S407–L409 is G5.

Belongs to the TRAFAC class translation factor GTPase superfamily. Classic translation factor GTPase family. IF-2 subfamily.

The protein localises to the cytoplasm. Its function is as follows. One of the essential components for the initiation of protein synthesis. Protects formylmethionyl-tRNA from spontaneous hydrolysis and promotes its binding to the 30S ribosomal subunits. Also involved in the hydrolysis of GTP during the formation of the 70S ribosomal complex. In Shouchella clausii (strain KSM-K16) (Alkalihalobacillus clausii), this protein is Translation initiation factor IF-2.